Here is a 1234-residue protein sequence, read N- to C-terminus: ATP-dependent helicase/nuclease subunit A (1234 aa).

In terms of domain architecture, UvrD-like helicase ATP-binding spans 2–475 (TQFTTSQQAA…IILAENFRST (474 aa)). Residue 23–30 (ASAGSGKT) participates in ATP binding. Residues 507 to 806 (YGALDYGDAH…KLMTIHKSKG (300 aa)) form the UvrD-like helicase C-terminal domain.

This sequence belongs to the helicase family. AddA subfamily. Heterodimer of AddA and AddB/RexB. Mg(2+) serves as cofactor.

It carries out the reaction Couples ATP hydrolysis with the unwinding of duplex DNA by translocating in the 3'-5' direction.. It catalyses the reaction ATP + H2O = ADP + phosphate + H(+). Its function is as follows. The heterodimer acts as both an ATP-dependent DNA helicase and an ATP-dependent, dual-direction single-stranded exonuclease. Recognizes the chi site generating a DNA molecule suitable for the initiation of homologous recombination. The AddA nuclease domain is required for chi fragment generation; this subunit has the helicase and 3' -&gt; 5' nuclease activities. The chain is ATP-dependent helicase/nuclease subunit A from Lacticaseibacillus casei (strain BL23) (Lactobacillus casei).